Consider the following 316-residue polypeptide: Aspartate-semialdehyde dehydrogenase (316 aa).

NADP(+) is bound by residues 13-16 (TGAV) and 41-42 (RS). Phosphate is bound at residue arginine 101. The active-site Acyl-thioester intermediate is the cysteine 132. Substrate is bound at residue glutamine 159. 162-163 (SG) contributes to the NADP(+) binding site. Lysine 216 serves as a coordination point for phosphate. A substrate-binding site is contributed by arginine 238. Histidine 245 functions as the Proton acceptor in the catalytic mechanism. Asparagine 316 is a binding site for NADP(+).

The protein belongs to the aspartate-semialdehyde dehydrogenase family. As to quaternary structure, homodimer.

It carries out the reaction L-aspartate 4-semialdehyde + phosphate + NADP(+) = 4-phospho-L-aspartate + NADPH + H(+). It functions in the pathway amino-acid biosynthesis; L-lysine biosynthesis via DAP pathway; (S)-tetrahydrodipicolinate from L-aspartate: step 2/4. It participates in amino-acid biosynthesis; L-methionine biosynthesis via de novo pathway; L-homoserine from L-aspartate: step 2/3. Its pathway is amino-acid biosynthesis; L-threonine biosynthesis; L-threonine from L-aspartate: step 2/5. Functionally, catalyzes the NADPH-dependent formation of L-aspartate-semialdehyde (L-ASA) by the reductive dephosphorylation of L-aspartyl-4-phosphate. This is Aspartate-semialdehyde dehydrogenase (asd) from Vibrio mimicus.